The chain runs to 268 residues: Leucyl/phenylalanyl-tRNA--protein transferase (268 aa).

This sequence belongs to the L/F-transferase family.

It localises to the cytoplasm. It catalyses the reaction N-terminal L-lysyl-[protein] + L-leucyl-tRNA(Leu) = N-terminal L-leucyl-L-lysyl-[protein] + tRNA(Leu) + H(+). It carries out the reaction N-terminal L-arginyl-[protein] + L-leucyl-tRNA(Leu) = N-terminal L-leucyl-L-arginyl-[protein] + tRNA(Leu) + H(+). The catalysed reaction is L-phenylalanyl-tRNA(Phe) + an N-terminal L-alpha-aminoacyl-[protein] = an N-terminal L-phenylalanyl-L-alpha-aminoacyl-[protein] + tRNA(Phe). Its function is as follows. Functions in the N-end rule pathway of protein degradation where it conjugates Leu, Phe and, less efficiently, Met from aminoacyl-tRNAs to the N-termini of proteins containing an N-terminal arginine or lysine. This chain is Leucyl/phenylalanyl-tRNA--protein transferase, found in Zymomonas mobilis subsp. mobilis (strain ATCC 31821 / ZM4 / CP4).